The sequence spans 252 residues: MNKFEDIRGVAFDLDGTLVDSAPGLAAAVDMALYALELPVAGEERVITWIGNGADVLMERALAWARQERATLRKTMGKPPVDDDIPAEEQVRILRKLFDRYYSEVAEEGTFLFPHVADTLGALQAKGLPLGLVTNKPTPFVAPLLEALDIAKYFSVVIGGDDVQNKKPHPDPLLLVAERMGIAPQQMLFVGDSRNDIQAAKAAGCPSVGLTYGYNYGEAIDLSQPDVIYQSINDLLPALGLPHSENQESKND.

The Nucleophile role is filled by D13. Mg(2+) is bound by residues D13, D15, and D192.

This sequence belongs to the HAD-like hydrolase superfamily. CbbY/CbbZ/Gph/YieH family. In terms of assembly, monomer. The cofactor is Mg(2+). Chloride serves as cofactor.

The enzyme catalyses 2-phosphoglycolate + H2O = glycolate + phosphate. It participates in organic acid metabolism; glycolate biosynthesis; glycolate from 2-phosphoglycolate: step 1/1. Its function is as follows. Specifically catalyzes the dephosphorylation of 2-phosphoglycolate. Is involved in the dissimilation of the intracellular 2-phosphoglycolate formed during the DNA repair of 3'-phosphoglycolate ends, a major class of DNA lesions induced by oxidative stress. The polypeptide is Phosphoglycolate phosphatase (Shigella boydii serotype 4 (strain Sb227)).